A 270-amino-acid polypeptide reads, in one-letter code: Phosphonates import ATP-binding protein PhnC 1 (270 aa).

The ABC transporter domain maps to 2–245 (LVVEGLTCRF…IARELYDLEA (244 aa)). 34-41 (GRSGAGKS) contributes to the ATP binding site.

It belongs to the ABC transporter superfamily. Phosphonates importer (TC 3.A.1.9.1) family. As to quaternary structure, the complex is composed of two ATP-binding proteins (PhnC), two transmembrane proteins (PhnE) and a solute-binding protein (PhnD).

It localises to the cell inner membrane. The enzyme catalyses phosphonate(out) + ATP + H2O = phosphonate(in) + ADP + phosphate + H(+). In terms of biological role, part of the ABC transporter complex PhnCDE involved in phosphonates import. Responsible for energy coupling to the transport system. In Rhodopseudomonas palustris (strain ATCC BAA-98 / CGA009), this protein is Phosphonates import ATP-binding protein PhnC 1.